We begin with the raw amino-acid sequence, 646 residues long: Protein SENSITIVE TO UV 2 (646 aa).

The disordered stretch occupies residues 42–70 (PAPPPSTKISSSLSHPMQLQSSAGQQRKQ). The segment covering 48–70 (TKISSSLSHPMQLQSSAGQQRKQ) has biased composition (polar residues). Positions 119–126 (NRRCDSEK) match the Nuclear localization signal motif. The stretch at 123–157 (DSEKDLEIDRLKKELERVSKQLLDVEQECSQLKKG) forms a coiled coil. The 271-residue stretch at 376 to 646 (KRTEQDVKQE…VFAFLGDNTI (271 aa)) folds into the Phosphatase tensin-type domain.

Belongs to the serpin family. As to quaternary structure, forms multimers through the coiled-coil domain. Probably phosphorylated by ATR. Accumulates throughout the root tip.

The protein localises to the nucleus. The protein resides in the cytoplasm. Its function is as follows. Required for tolerance to DNA-damaging and cross-linking agents such as UVB irradiation, gamma-radiation, aphidicolin, ionizing radiation and hydroxyurea (HU), cisplatin (CDDP) and mitomycin C (MMC). Involved in cell-cycle G2/M arrest in response to DNA damage. Required for aluminum-dependent gene regulation and root growth inhibition in an ATR-dependent manner by halting cell cycle progression and triggering loss of the quiescent center (QC). This chain is Protein SENSITIVE TO UV 2, found in Arabidopsis thaliana (Mouse-ear cress).